The primary structure comprises 134 residues: uncharacterized protein (134 aa).

The protein localises to the mitochondrion. This is an uncharacterized protein from Saccharomyces cerevisiae (strain ATCC 204508 / S288c) (Baker's yeast).